The sequence spans 274 residues: Elongation factor Ts (274 aa).

Residues Thr79 to Val82 are involved in Mg(2+) ion dislocation from EF-Tu.

It belongs to the EF-Ts family.

The protein localises to the cytoplasm. Its function is as follows. Associates with the EF-Tu.GDP complex and induces the exchange of GDP to GTP. It remains bound to the aminoacyl-tRNA.EF-Tu.GTP complex up to the GTP hydrolysis stage on the ribosome. The sequence is that of Elongation factor Ts from Aster yellows witches'-broom phytoplasma (strain AYWB).